The primary structure comprises 273 residues: Bis(5'-nucleosyl)-tetraphosphatase, symmetrical (273 aa).

This sequence belongs to the Ap4A hydrolase family.

The enzyme catalyses P(1),P(4)-bis(5'-adenosyl) tetraphosphate + H2O = 2 ADP + 2 H(+). Its function is as follows. Hydrolyzes diadenosine 5',5'''-P1,P4-tetraphosphate to yield ADP. This Aromatoleum aromaticum (strain DSM 19018 / LMG 30748 / EbN1) (Azoarcus sp. (strain EbN1)) protein is Bis(5'-nucleosyl)-tetraphosphatase, symmetrical.